Reading from the N-terminus, the 327-residue chain is Eukaryotic translation initiation factor 3 subunit I (327 aa).

WD repeat units lie at residues 8-47 (GHQRAITQIKYNREGDLIFSSAKDSKPSVWYSLNGERLGT), 50-89 (GHIGAVWCVDVDWTTTRLITGAGDMNTFLWDVETGTALGK), 147-186 (EQQSKITSMLWGALDETVITGHENGSLRIWDLRAVKELNS), 189-228 (DHTASITDMQMSSDGTMFVSSSKDCSAKLFDSDSLMCLKT), and 286-327 (GHFG…HTFE).

It belongs to the eIF-3 subunit I family. As to quaternary structure, component of the eukaryotic translation initiation factor 3 (eIF-3) complex.

Its subcellular location is the cytoplasm. Functionally, component of the eukaryotic translation initiation factor 3 (eIF-3) complex, which is involved in protein synthesis of a specialized repertoire of mRNAs and, together with other initiation factors, stimulates binding of mRNA and methionyl-tRNAi to the 40S ribosome. The eIF-3 complex specifically targets and initiates translation of a subset of mRNAs involved in cell proliferation. This chain is Eukaryotic translation initiation factor 3 subunit I, found in Anopheles gambiae (African malaria mosquito).